The chain runs to 338 residues: MTCTIVVGGQWGDEGKGKIISYLCKKDNPSIIARGGVGPNAGHTVEVDGEKYGIRMVPTGFPNVNAKLAVGAGVLTDPEVLLKEIQMLEKFNVGERMIIDFRCGIIEEIHKELDKSNEHLSKEIGSTGTGCGPANVDRAMRTLKQGKDVESISKYLGDVSEAVNEALEAGYNVLIEGTQGSLLSLFYGSYPYVTSKDTNAASFAADVGVGPTKIDEVVAVFKSYPTRVGEGPFPTEMSVEEAESLGVVEYGTVTGRRRRVGYFDHELAKKVCRLNGATQIAITCLDKYDNECYGITEYEKLSEKGKAFIKEVEEKVGVKVTLISTGPELTQTIDVRNK.

Residues 12–18 and 42–44 each bind GTP; these read GDEGKGK and GHT. The active-site Proton acceptor is the D13. Mg(2+) is bound by residues D13 and G42. IMP contacts are provided by residues 13 to 16, 40 to 43, T127, R141, Q179, T194, and R256; these read DEGK and NAGH. H43 functions as the Proton donor in the catalytic mechanism. 252–258 lines the substrate pocket; that stretch reads TVTGRRR. GTP is bound by residues R258, 284 to 286, and 324 to 326; these read CLD and STG.

It belongs to the adenylosuccinate synthetase family. In terms of assembly, homodimer. Requires Mg(2+) as cofactor.

It localises to the cytoplasm. It catalyses the reaction IMP + L-aspartate + GTP = N(6)-(1,2-dicarboxyethyl)-AMP + GDP + phosphate + 2 H(+). It functions in the pathway purine metabolism; AMP biosynthesis via de novo pathway; AMP from IMP: step 1/2. Its function is as follows. Plays an important role in the de novo pathway of purine nucleotide biosynthesis. Catalyzes the first committed step in the biosynthesis of AMP from IMP. The protein is Adenylosuccinate synthetase of Methanococcus maripaludis (strain C7 / ATCC BAA-1331).